Here is a 70-residue protein sequence, read N- to C-terminus: Potassium channel toxin kappa-KTx 2.5 (70 aa).

The N-terminal stretch at 1–26 (MESSRKSYVLMLFLAFVIMNVCSVSG) is a signal peptide. Positions 27-42 (EPKDGEIAGFEMEEAR) are excised as a propeptide. 2 disulfide bridges follow: Cys-46/Cys-64 and Cys-50/Cys-60.

This sequence belongs to the short scorpion toxin superfamily. Potassium channel inhibitor kappa-KTx family. Kappa-KTx 2 subfamily. In terms of tissue distribution, expressed by the venom gland.

The protein localises to the secreted. Voltage-independently blocks potassium currents on hKv1.1/KCNA1 (IC(50)=217 uM), and hKv1.4/KCNA4 (IC(50)=71 uM) (expressed in CHO cells). The polypeptide is Potassium channel toxin kappa-KTx 2.5 (Opisthacanthus cayaporum (South American scorpion)).